A 109-amino-acid chain; its full sequence is Cell division protein ZapA (109 aa).

A coiled-coil region spans residues 21-97 (PEQRDALSQA…QTIEQALLDQ (77 aa)).

It belongs to the ZapA family. Type 1 subfamily. As to quaternary structure, homodimer. Interacts with FtsZ.

Its subcellular location is the cytoplasm. Functionally, activator of cell division through the inhibition of FtsZ GTPase activity, therefore promoting FtsZ assembly into bundles of protofilaments necessary for the formation of the division Z ring. It is recruited early at mid-cell but it is not essential for cell division. This Enterobacter sp. (strain 638) protein is Cell division protein ZapA.